A 940-amino-acid chain; its full sequence is Translation initiation factor IF-2 (940 aa).

Disordered regions lie at residues 116–137 (PEQE…SSDT), 151–196 (EVEA…EQRS), 210–294 (AVRK…VKKV), and 318–346 (HSAP…VANR). Polar residues predominate over residues 121 to 137 (LESTSVAEIPESVSSDT). Over residues 159-180 (PEPEVEATPEPEVEDVVAEEAE) the composition is skewed to acidic residues. The span at 181–193 (PAAAEPAPAPVVE) shows a compositional bias: low complexity. Residues 213 to 239 (KKAEEEAEVARRKADAEKAEAAAKQKA) are compositionally biased toward basic and acidic residues. The span at 282–294 (KHNKKAGKAVKKV) shows a compositional bias: basic residues. Low complexity predominate over residues 326–337 (GGQNNNSSNSGS). The tr-type G domain occupies 441–610 (ARAPVVTVMG…ALQAELLELS (170 aa)). The segment at 450 to 457 (GHVDHGKT) is G1. Residue 450–457 (GHVDHGKT) coordinates GTP. Residues 475 to 479 (GITQH) are G2. The G3 stretch occupies residues 496 to 499 (DTPG). GTP is bound by residues 496–500 (DTPGH) and 550–553 (NKID). Residues 550-553 (NKID) are G4. The G5 stretch occupies residues 586–588 (SAQ).

Belongs to the TRAFAC class translation factor GTPase superfamily. Classic translation factor GTPase family. IF-2 subfamily.

The protein resides in the cytoplasm. Its function is as follows. One of the essential components for the initiation of protein synthesis. Protects formylmethionyl-tRNA from spontaneous hydrolysis and promotes its binding to the 30S ribosomal subunits. Also involved in the hydrolysis of GTP during the formation of the 70S ribosomal complex. The chain is Translation initiation factor IF-2 from Teredinibacter turnerae (strain ATCC 39867 / T7901).